We begin with the raw amino-acid sequence, 814 residues long: Putative E3 ubiquitin-protein ligase RF298 (814 aa).

Disordered regions lie at residues 1 to 51 (MVEK…ASLT), 221 to 301 (SVSN…TKSA), and 411 to 441 (ALPANNAPAPVASEKKSGSEPEEKPSVSTKP). Residues 221-231 (SVSNASKSSES) are compositionally biased toward low complexity. Residues 289–301 (SVSTASGEGTKSA) show a composition bias toward polar residues. Over residues 423-435 (SEKKSGSEPEEKP) the composition is skewed to basic and acidic residues. A coiled-coil region spans residues 506–710 (ELKALRKEKE…KLKSDSLKIA (205 aa)). Residues 760–800 (CVMCLSEEMSVIFLPCAHQVLCSKCNQLHEKEAMEDCPSCR) form an RING-type zinc finger.

The protein belongs to the RING-type zinc finger family.

It carries out the reaction S-ubiquitinyl-[E2 ubiquitin-conjugating enzyme]-L-cysteine + [acceptor protein]-L-lysine = [E2 ubiquitin-conjugating enzyme]-L-cysteine + N(6)-ubiquitinyl-[acceptor protein]-L-lysine.. Its pathway is protein modification; protein ubiquitination. This Arabidopsis thaliana (Mouse-ear cress) protein is Putative E3 ubiquitin-protein ligase RF298 (RF298).